The chain runs to 325 residues: Protease HtpX homolog 2 (325 aa).

2 consecutive transmembrane segments (helical) span residues 10 to 30 (LNMA…ALAV) and 41 to 61 (VGLI…QWLF). A Zn(2+)-binding site is contributed by His-147. Residue Glu-148 is part of the active site. Zn(2+) is bound at residue His-151. Helical transmembrane passes span 159–179 (LLMA…WLFW) and 196–216 (LVFL…LLVL). Residue Glu-223 participates in Zn(2+) binding.

Belongs to the peptidase M48B family. Zn(2+) serves as cofactor.

Its subcellular location is the cell membrane. The chain is Protease HtpX homolog 2 from Saccharolobus solfataricus (strain ATCC 35092 / DSM 1617 / JCM 11322 / P2) (Sulfolobus solfataricus).